The chain runs to 1308 residues: Receptor tyrosine-protein kinase erbB-4 (1308 aa).

Positions 1-25 (MKPATGLWVWVSLLVAAGTVQPSDS) are cleaved as a signal peptide. At 26–651 (QSVCAGTENK…STLPQHARTP (626 aa)) the chain is on the extracellular side. C29 and C56 form a disulfide bridge. N-linked (GlcNAc...) asparagine glycosylation is found at N138, N174, and N181. Cystine bridges form between C156–C186, C189–C197, C193–C205, C213–C221, C217–C229, C230–C238, C234–C246, C249–C258, C262–C289, C293–C304, C308–C323, and C326–C330. N253 carries N-linked (GlcNAc...) asparagine glycosylation. N358, N410, N473, and N495 each carry an N-linked (GlcNAc...) asparagine glycan. Intrachain disulfides connect C503–C512, C507–C520, C523–C532, C536–C552, C555–C569, C559–C577, C580–C589, C593–C614, C617–C625, and C621–C633. A glycan (N-linked (GlcNAc...) asparagine) is linked at N548. Residue N576 is glycosylated (N-linked (GlcNAc...) asparagine). N620 is a glycosylation site (N-linked (GlcNAc...) asparagine). Residues 652–675 (LIAAGVIGGLFILVIVGLTFAVYV) traverse the membrane as a helical segment. The Nuclear localization signal motif lies at 676–684 (RRKSIKKKR). The Cytoplasmic segment spans residues 676–1308 (RRKSIKKKRA…PPYRHRNTVV (633 aa)). The region spanning 718–985 (LKRVKVLGSG…RMARDPQRYL (268 aa)) is the Protein kinase domain. ATP contacts are provided by residues 724–732 (LGSGAFGTV), K751, 797–799 (QLM), and 843–848 (DLAARN). The Proton acceptor role is filled by D843. Phosphotyrosine; by autocatalysis is present on residues Y875, Y1035, Y1056, Y1150, Y1162, Y1188, Y1202, Y1242, Y1258, and Y1284. Short sequence motifs (PPxY motif) lie at residues 1032–1035 (PPIY) and 1053–1056 (PPAY). Residues 1117 to 1150 (PHVQEDSSTQRYSADPTVFAPERSPRGELDEEGY) form a disordered region. The PPxY motif 3 motif lies at 1298-1301 (PPPY). Positions 1306 to 1308 (TVV) match the PDZ-binding motif.

This sequence belongs to the protein kinase superfamily. Tyr protein kinase family. EGF receptor subfamily. In terms of assembly, monomer in the absence of bound ligand. Homodimer or heterodimer with another ERBB family member upon ligand binding, thus forming heterotetramers. Interacts with EGFR and ERBB2. Interacts with CBFA2T3. Interacts with DLG2 (via its PDZ domain), DLG3 (via its PDZ domain), DLG4 (via its PDZ domain) and SNTB2 (via its PDZ domain). Interacts with MUC1. Interacts (via its PPxy motifs) with WWOX. Interacts (via the PPxY motif 3 of isoform JM-A CYT-2) with YAP1 (via the WW domain 1 of isoform 1). Interacts (isoform JM-A CYT-1 and isoform JM-B CYT-1) with WWP1. Interacts (via its intracellular domain) with TRIM28. Interacts (via the intracellular domains of both CYT-1 and CYT-2 isoforms) with KAP1; the interaction does not phosphorylate KAP1 but represses ERBB4-mediated transcriptional activity. Interacts with PRPU, DDX23, MATR3, RBM15, ILF3, KAP1, U5S1, U2SURP, ITCH, HNRNPU, AP2A1, NULC, LEO1, WWP2, IGHG1, HXK1, GRB7 and SRRT. Interacts (phosphorylated isoform JM-A CYT-1 and isoform JM-B CYT-1) with PIK3R1. Interacts with SHC1. Interacts with GRB2. Interacts (soluble intracellular domain) with STAT5A. Interacts (soluble intracellular domain) with BCL2. Interacts (phosphorylated) with STAT1. In terms of processing, isoform JM-A CYT-1 and isoform JM-A CYT-2 are processed by ADAM17. Proteolytic processing in response to ligand or 12-O-tetradecanoylphorbol-13-acetate stimulation results in the production of 120 kDa soluble receptor forms and intermediate membrane-anchored 80 kDa fragments (m80HER4), which are further processed by a presenilin-dependent gamma-secretase to release a cytoplasmic intracellular domain (E4ICD; E4ICD1/s80Cyt1 or E4ICD2/s80Cyt2, depending on the isoform). Membrane-anchored 80 kDa fragments of the processed isoform JM-A CYT-1 are more readily degraded by the proteasome than fragments of isoform JM-A CYT-2, suggesting a prevalence of E4ICD2 over E4ICD1. Isoform JM-B CYT-1 and isoform JM-B CYT-2 lack the ADAM17 cleavage site and are not processed by ADAM17, precluding further processing by gamma-secretase. Post-translationally, autophosphorylated on tyrosine residues in response to ligand binding. Autophosphorylation occurs in trans, i.e. one subunit of the dimeric receptor phosphorylates tyrosine residues on the other subunit. Ligands trigger phosphorylation at specific tyrosine residues, thereby creating binding sites for scaffold proteins and effectors. Constitutively phosphorylated at a basal level when overexpressed in heterologous systems; ligand binding leads to increased phosphorylation. Phosphorylation at Tyr-1035 is important for interaction with STAT1. Phosphorylation at Tyr-1056 is important for interaction with PIK3R1. Phosphorylation at Tyr-1242 is important for interaction with SHC1. Phosphorylation at Tyr-1188 may also contribute to the interaction with SHC1. Isoform JM-A CYT-2 is constitutively phosphorylated on tyrosine residues in a ligand-independent manner. E4ICD2 but not E4ICD1 is phosphorylated on tyrosine residues. Ubiquitinated. During mitosis, the ERBB4 intracellular domain is ubiquitinated by the APC/C complex and targeted to proteasomal degradation. Isoform JM-A CYT-1 and isoform JM-B CYT-1 are ubiquitinated by WWP1. The ERBB4 intracellular domain (E4ICD1) is ubiquitinated, and this involves NEDD4. Expressed at highest levels in brain, heart, kidney, in addition to skeletal muscle, parathyroid, cerebellum, pituitary, spleen, testis and breast. Lower levels in thymus, lung, salivary gland, and pancreas. Isoform JM-A CYT-1 and isoform JM-B CYT-1 are expressed in cerebellum, but only the isoform JM-B is expressed in the heart.

The protein resides in the cell membrane. The protein localises to the nucleus. It is found in the mitochondrion. It carries out the reaction L-tyrosyl-[protein] + ATP = O-phospho-L-tyrosyl-[protein] + ADP + H(+). Its activity is regulated as follows. Binding of a cognate ligand leads to dimerization and activation by autophosphorylation on tyrosine residues. In vitro kinase activity is increased by Mg(2+). Inhibited by PD153035, lapatinib, gefitinib (iressa, ZD1839), AG1478 and BIBX1382BS. In terms of biological role, tyrosine-protein kinase that plays an essential role as cell surface receptor for neuregulins and EGF family members and regulates development of the heart, the central nervous system and the mammary gland, gene transcription, cell proliferation, differentiation, migration and apoptosis. Required for normal cardiac muscle differentiation during embryonic development, and for postnatal cardiomyocyte proliferation. Required for normal development of the embryonic central nervous system, especially for normal neural crest cell migration and normal axon guidance. Required for mammary gland differentiation, induction of milk proteins and lactation. Acts as cell-surface receptor for the neuregulins NRG1, NRG2, NRG3 and NRG4 and the EGF family members BTC, EREG and HBEGF. Ligand binding triggers receptor dimerization and autophosphorylation at specific tyrosine residues that then serve as binding sites for scaffold proteins and effectors. Ligand specificity and signaling is modulated by alternative splicing, proteolytic processing, and by the formation of heterodimers with other ERBB family members, thereby creating multiple combinations of intracellular phosphotyrosines that trigger ligand- and context-specific cellular responses. Mediates phosphorylation of SHC1 and activation of the MAP kinases MAPK1/ERK2 and MAPK3/ERK1. Isoform JM-A CYT-1 and isoform JM-B CYT-1 phosphorylate PIK3R1, leading to the activation of phosphatidylinositol 3-kinase and AKT1 and protect cells against apoptosis. Isoform JM-A CYT-1 and isoform JM-B CYT-1 mediate reorganization of the actin cytoskeleton and promote cell migration in response to NRG1. Isoform JM-A CYT-2 and isoform JM-B CYT-2 lack the phosphotyrosine that mediates interaction with PIK3R1, and hence do not phosphorylate PIK3R1, do not protect cells against apoptosis, and do not promote reorganization of the actin cytoskeleton and cell migration. Proteolytic processing of isoform JM-A CYT-1 and isoform JM-A CYT-2 gives rise to the corresponding soluble intracellular domains (4ICD) that translocate to the nucleus, promote nuclear import of STAT5A, activation of STAT5A, mammary epithelium differentiation, cell proliferation and activation of gene expression. The ERBB4 soluble intracellular domains (4ICD) colocalize with STAT5A at the CSN2 promoter to regulate transcription of milk proteins during lactation. The ERBB4 soluble intracellular domains can also translocate to mitochondria and promote apoptosis. In Homo sapiens (Human), this protein is Receptor tyrosine-protein kinase erbB-4 (ERBB4).